Reading from the N-terminus, the 122-residue chain is Large ribosomal subunit protein uL14c (122 aa).

This sequence belongs to the universal ribosomal protein uL14 family. Part of the 50S ribosomal subunit.

It is found in the plastid. Its subcellular location is the chloroplast. In terms of biological role, binds to 23S rRNA. This chain is Large ribosomal subunit protein uL14c, found in Cycas taitungensis (Prince sago).